Consider the following 586-residue polypeptide: Arginine--tRNA ligase (586 aa).

The 'HIGH' region motif lies at 131-141; that stretch reads ANPTGPLHVGH.

It belongs to the class-I aminoacyl-tRNA synthetase family. As to quaternary structure, monomer.

It localises to the cytoplasm. It carries out the reaction tRNA(Arg) + L-arginine + ATP = L-arginyl-tRNA(Arg) + AMP + diphosphate. The chain is Arginine--tRNA ligase from Nitrosomonas europaea (strain ATCC 19718 / CIP 103999 / KCTC 2705 / NBRC 14298).